The chain runs to 254 residues: Phosphonates import ATP-binding protein PhnC (254 aa).

Residues 2 to 246 (IQLKNVSKIY…VFDDIYNGGN (245 aa)) enclose the ABC transporter domain. Residue 35–42 (GLSGAGKS) participates in ATP binding.

It belongs to the ABC transporter superfamily. Phosphonates importer (TC 3.A.1.9.1) family. As to quaternary structure, the complex is composed of two ATP-binding proteins (PhnC), two transmembrane proteins (PhnE) and a solute-binding protein (PhnD).

Its subcellular location is the cell membrane. It catalyses the reaction phosphonate(out) + ATP + H2O = phosphonate(in) + ADP + phosphate + H(+). Part of the ABC transporter complex PhnCDE involved in phosphonates import. Responsible for energy coupling to the transport system. In Lactobacillus johnsonii (strain CNCM I-12250 / La1 / NCC 533), this protein is Phosphonates import ATP-binding protein PhnC.